The chain runs to 119 residues: Ribosome-binding factor A (119 aa).

Belongs to the RbfA family. In terms of assembly, monomer. Binds 30S ribosomal subunits, but not 50S ribosomal subunits or 70S ribosomes.

The protein localises to the cytoplasm. One of several proteins that assist in the late maturation steps of the functional core of the 30S ribosomal subunit. Associates with free 30S ribosomal subunits (but not with 30S subunits that are part of 70S ribosomes or polysomes). Required for efficient processing of 16S rRNA. May interact with the 5'-terminal helix region of 16S rRNA. This Chlorobium luteolum (strain DSM 273 / BCRC 81028 / 2530) (Pelodictyon luteolum) protein is Ribosome-binding factor A.